Here is a 61-residue protein sequence, read N- to C-terminus: Insect toxin BsIT2 (61 aa).

The 61-residue stretch at 1–61 folds into the LCN-type CS-alpha/beta domain; sequence DGYIKKSKGC…RWKYETKTCK (61 aa). 4 disulfides stabilise this stretch: Cys10-Cys60, Cys14-Cys35, Cys21-Cys42, and Cys25-Cys44.

This sequence belongs to the long (4 C-C) scorpion toxin superfamily. Sodium channel inhibitor family. Beta subfamily. Expressed by the venom gland.

Its subcellular location is the secreted. Depressant insect beta-toxins cause a transient contraction paralysis followed by a slow flaccid paralysis. They bind voltage-independently at site-4 of sodium channels (Nav) and shift the voltage of activation toward more negative potentials thereby affecting sodium channel activation and promoting spontaneous and repetitive firing. This toxin is active only on insects. This chain is Insect toxin BsIT2, found in Hottentotta tamulus sindicus (Scorpion).